Consider the following 110-residue polypeptide: Small ubiquitin-related modifier 3 (110 aa).

Residues lysine 5 and lysine 7 each participate in a glycyl lysine isopeptide (Lys-Gly) (interchain with G-Cter in SUMO2) cross-link. A Glycyl lysine isopeptide (Lys-Gly) (interchain with G-Cter in SUMO); alternate cross-link involves residue lysine 11. Lysine 11 participates in a covalent cross-link: Glycyl lysine isopeptide (Lys-Gly) (interchain with G-Cter in SUMO2); alternate. The Ubiquitin-like domain maps to aspartate 15–glycine 92. Over residues glutamine 89–threonine 101 the composition is skewed to polar residues. The tract at residues glutamine 89–tyrosine 110 is disordered. Residue glycine 92 forms a Glycyl lysine isopeptide (Gly-Lys) (interchain with K-? in acceptor proteins) linkage. The propeptide occupies threonine 93–tyrosine 110.

Belongs to the ubiquitin family. SUMO subfamily. In terms of assembly, interacts with SAE2 and UBE2I. Covalently attached to a number of proteins. Interacts with USP25 (via ts SIM domain); the interaction sumoylates USP25 and inhibits its ubiquitin hydrolyzing activity. Interacts with BMAL1. Post-translationally, polymeric chains can be formed through Lys-11 cross-linking. Cleavage of precursor form by SENP1, SENP2 or SENP5 is necessary for function.

Its subcellular location is the cytoplasm. The protein resides in the nucleus. The protein localises to the PML body. In terms of biological role, ubiquitin-like protein which can be covalently attached to target lysines either as a monomer or as a lysine-linked polymer. Does not seem to be involved in protein degradation and may function as an antagonist of ubiquitin in the degradation process. Plays a role in a number of cellular processes such as nuclear transport, DNA replication and repair, mitosis and signal transduction. Covalent attachment to its substrates requires prior activation by the E1 complex SAE1-SAE2 and linkage to the E2 enzyme UBE2I, and can be promoted by an E3 ligase such as PIAS1-4, RANBP2 or CBX4. Plays a role in the regulation of sumoylation status of SETX. The chain is Small ubiquitin-related modifier 3 (Sumo3) from Rattus norvegicus (Rat).